Consider the following 448-residue polypeptide: Probable glycine dehydrogenase (decarboxylating) subunit 1 (448 aa).

The protein belongs to the GcvP family. N-terminal subunit subfamily. In terms of assembly, the glycine cleavage system is composed of four proteins: P, T, L and H. In this organism, the P 'protein' is a heterodimer of two subunits.

It carries out the reaction N(6)-[(R)-lipoyl]-L-lysyl-[glycine-cleavage complex H protein] + glycine + H(+) = N(6)-[(R)-S(8)-aminomethyldihydrolipoyl]-L-lysyl-[glycine-cleavage complex H protein] + CO2. Its function is as follows. The glycine cleavage system catalyzes the degradation of glycine. The P protein binds the alpha-amino group of glycine through its pyridoxal phosphate cofactor; CO(2) is released and the remaining methylamine moiety is then transferred to the lipoamide cofactor of the H protein. This is Probable glycine dehydrogenase (decarboxylating) subunit 1 from Thermomicrobium roseum (strain ATCC 27502 / DSM 5159 / P-2).